Consider the following 272-residue polypeptide: L-aspartate dehydrogenase 3 (272 aa).

NAD(+) contacts are provided by A126 and N194. H224 is a catalytic residue.

It belongs to the L-aspartate dehydrogenase family.

It catalyses the reaction L-aspartate + NADP(+) + H2O = oxaloacetate + NH4(+) + NADPH + H(+). The enzyme catalyses L-aspartate + NAD(+) + H2O = oxaloacetate + NH4(+) + NADH + H(+). The protein operates within cofactor biosynthesis; NAD(+) biosynthesis; iminoaspartate from L-aspartate (dehydrogenase route): step 1/1. Specifically catalyzes the NAD or NADP-dependent dehydrogenation of L-aspartate to iminoaspartate. This is L-aspartate dehydrogenase 3 from Bordetella bronchiseptica (strain ATCC BAA-588 / NCTC 13252 / RB50) (Alcaligenes bronchisepticus).